Consider the following 422-residue polypeptide: Phosphoribosylamine--glycine ligase (422 aa).

An ATP-grasp domain is found at 107 to 313; it reads KDLMKKYDIP…LVQVLLDLLD (207 aa). 133–194 lines the ATP pocket; the sequence is VQEKGAPIVI…EEYLSGEEFS (62 aa). The Mg(2+) site is built by Glu283 and Asn285.

This sequence belongs to the GARS family. The cofactor is Mg(2+). Mn(2+) is required as a cofactor.

It catalyses the reaction 5-phospho-beta-D-ribosylamine + glycine + ATP = N(1)-(5-phospho-beta-D-ribosyl)glycinamide + ADP + phosphate + H(+). It functions in the pathway purine metabolism; IMP biosynthesis via de novo pathway; N(1)-(5-phospho-D-ribosyl)glycinamide from 5-phospho-alpha-D-ribose 1-diphosphate: step 2/2. The chain is Phosphoribosylamine--glycine ligase from Bacillus subtilis (strain 168).